We begin with the raw amino-acid sequence, 194 residues long: FMN-dependent NADH:quinone oxidoreductase (194 aa).

Residues serine 10, 16 to 18 (SQS), 91 to 94 (MYNF), and 135 to 138 (TRGG) each bind FMN.

Belongs to the azoreductase type 1 family. Homodimer. The cofactor is FMN.

The enzyme catalyses 2 a quinone + NADH + H(+) = 2 a 1,4-benzosemiquinone + NAD(+). It catalyses the reaction N,N-dimethyl-1,4-phenylenediamine + anthranilate + 2 NAD(+) = 2-(4-dimethylaminophenyl)diazenylbenzoate + 2 NADH + 2 H(+). In terms of biological role, quinone reductase that provides resistance to thiol-specific stress caused by electrophilic quinones. Functionally, also exhibits azoreductase activity. Catalyzes the reductive cleavage of the azo bond in aromatic azo compounds to the corresponding amines. This chain is FMN-dependent NADH:quinone oxidoreductase, found in Vibrio parahaemolyticus serotype O3:K6 (strain RIMD 2210633).